Consider the following 487-residue polypeptide: uncharacterized protein (487 aa).

Positions 1 to 31 (MRFHRQGISAIIGVLLIVLLGFCWKLSGSYG) are cleaved as a signal peptide. Residues N40, N68, N150, N220, N304, N367, N442, and N448 are each glycosylated (N-linked (GlcNAc...) asparagine). The tract at residues 141–176 (LERRHGRFGNGTNGDHPKGPPPPPPPPDEKGRGSQK) is disordered.

N-glycosylated.

This is an uncharacterized protein from Saccharomyces cerevisiae (strain ATCC 204508 / S288c) (Baker's yeast).